The sequence spans 69 residues: Large ribosomal subunit protein bL31 (69 aa).

Residues Cys16, Cys18, Cys38, and Cys41 each coordinate Zn(2+).

It belongs to the bacterial ribosomal protein bL31 family. Type A subfamily. As to quaternary structure, part of the 50S ribosomal subunit. It depends on Zn(2+) as a cofactor.

Binds the 23S rRNA. This chain is Large ribosomal subunit protein bL31, found in Thermobifida fusca (strain YX).